Consider the following 154-residue polypeptide: Myoglobin (154 aa).

The region spanning 2-148 is the Globin domain; the sequence is GLSDGEWQLV…FRNDMAAKYK (147 aa). Ser-4 carries the phosphoserine modification. Nitrite is bound at residue His-65. Position 65 (His-65) interacts with O2. Thr-68 bears the Phosphothreonine mark. Residue His-94 coordinates heme b.

The protein belongs to the globin family. In terms of assembly, monomeric.

It localises to the cytoplasm. It is found in the sarcoplasm. It catalyses the reaction Fe(III)-heme b-[protein] + nitric oxide + H2O = Fe(II)-heme b-[protein] + nitrite + 2 H(+). The catalysed reaction is H2O2 + AH2 = A + 2 H2O. Monomeric heme protein which primary function is to store oxygen and facilitate its diffusion within muscle tissues. Reversibly binds oxygen through a pentacoordinated heme iron and enables its timely and efficient release as needed during periods of heightened demand. Depending on the oxidative conditions of tissues and cells, and in addition to its ability to bind oxygen, it also has a nitrite reductase activity whereby it regulates the production of bioactive nitric oxide. Under stress conditions, like hypoxia and anoxia, it also protects cells against reactive oxygen species thanks to its pseudoperoxidase activity. In Ornithorhynchus anatinus (Duckbill platypus), this protein is Myoglobin (MB).